The sequence spans 103 residues: MYAVFQSGGKQHRVSEGQTLRLEKLDVETGATVEFDKVLLVANGEDIKVGAPLVEGGKIVAEVVQHGRGDKVKIVKFRRRKHSRKQQGHRQWFTEVKITGINA.

The protein belongs to the bacterial ribosomal protein bL21 family. As to quaternary structure, part of the 50S ribosomal subunit. Contacts protein L20.

Functionally, this protein binds to 23S rRNA in the presence of protein L20. The sequence is that of Large ribosomal subunit protein bL21 from Vibrio parahaemolyticus serotype O3:K6 (strain RIMD 2210633).